A 328-amino-acid chain; its full sequence is Cysteine proteinase COT44 (328 aa).

Positions 1 to 99 are cleaved as a propeptide — activation peptide; that stretch reads MSIYLRWSLE…KYSAAVNVDE (99 aa). N-linked (GlcNAc...) asparagine glycans are attached at residues Asn48 and Asn60. 3 disulfides stabilise this stretch: Cys121–Cys163, Cys155–Cys196, and Cys254–Cys305. Cys124 is an active-site residue. Residues His260 and Asn280 contribute to the active site.

Belongs to the peptidase C1 family. As to expression, present in both cotyledons and axes.

In terms of biological role, may function in an early event in cortical cell differentiation. In Brassica napus (Rape), this protein is Cysteine proteinase COT44.